The primary structure comprises 1052 residues: Membrane-bound transcription factor site-1 protease (1052 aa).

An N-terminal signal peptide occupies residues 1–17 (MKLVSTWLLVLVVLLCG). Residues 18–186 (KRHLGDRLGT…TGRHSSRRLL (169 aa)) constitute a propeptide that is removed on maturation. A glycan (N-linked (GlcNAc...) asparagine) is linked at Asn-148. At Ser-168 the chain carries Phosphoserine. Topologically, residues 187–999 (RAIPRQVAQT…MPGRYNQEVG (813 aa)) are lumenal. The 283-residue stretch at 190–472 (PRQVAQTLQA…HGKLDLLRAY (283 aa)) folds into the Peptidase S8 domain. The active-site Charge relay system is the Asp-218. An N-linked (GlcNAc...) asparagine glycan is attached at Asn-236. The active-site Charge relay system is His-249. The N-linked (GlcNAc...) asparagine glycan is linked to Asn-305. Ser-414 serves as the catalytic Charge relay system. 2 N-linked (GlcNAc...) asparagine glycosylation sites follow: Asn-515 and Asn-728. Polar residues predominate over residues 877-887 (PSLSHSGNRQR). The tract at residues 877-900 (PSLSHSGNRQRPPSGAGLAPPERM) is disordered. A glycan (N-linked (GlcNAc...) asparagine) is linked at Asn-939. The helical transmembrane segment at 1000–1022 (QTIPVFAFLGAMVALAFFVVQIS) threads the bilayer. Topologically, residues 1023 to 1052 (KAKSRPKRRRPRAKRPQLAQQAHPARTPSV) are cytoplasmic. Residues 1026 to 1037 (SRPKRRRPRAKR) show a composition bias toward basic residues. The disordered stretch occupies residues 1026–1052 (SRPKRRRPRAKRPQLAQQAHPARTPSV).

This sequence belongs to the peptidase S8 family. In terms of assembly, interacts with LYSET; this interaction bridges GNPTAB to MBTPS1. It depends on Ca(2+) as a cofactor. The 148 kDa zymogen is processed progressively into two membrane-bound 120 and 106 kDa forms in the endoplasmic reticulum, and late into a secreted 98 kDa form. The propeptide is autocatalytically removed through an intramolecular cleavage after Leu-186. Further cleavage generates 14, 10, and 8 kDa intermediates.

It localises to the endoplasmic reticulum membrane. The protein localises to the golgi apparatus membrane. It carries out the reaction Processes precursors containing basic and hydrophobic/aliphatic residues at P4 and P2, respectively, with a relatively relaxed acceptance of amino acids at P1 and P3.. With respect to regulation, inhibited by divalent copper and zinc ions, but not by nickel or cobalt. Inhibited by its prosegment, but not smaller fragments. Inhibited by 4-(2-aminoethyl)benzenesulfonyl fluoride (AEBSF), a serine protease inhibitor. In terms of biological role, serine protease that cleaves after hydrophobic or small residues, provided that Arg or Lys is in position P4: known substrates include SREBF1/SREBP1, SREBF2/SREBP2, BDNF, GNPTAB, ATF6, ATF6B and FAM20C. Cleaves substrates after Arg-Ser-Val-Leu (SREBP2), Arg-His-Leu-Leu (ATF6), Arg-Gly-Leu-Thr (BDNF) and its own propeptide after Arg-Arg-Leu-Leu. Catalyzes the first step regulated intramembrane proteolysis activation of the sterol regulatory element-binding proteins (SREBPs) SREBF1/SREBP1 and SREBF2/SREBP2. Also mediates the first step of the regulated intramembrane proteolytic activation of the cyclic AMP-dependent transcription factor ATF-6 (ATF6 and ATF6B). Mediates the protein cleavage of GNPTAB into subunit alpha and beta, thereby participating in biogenesis of lysosomes. Cleaves the propeptide from FAM20C which is required for FAM20C secretion from the Golgi apparatus membrane and for enhancement of FAM20C kinase activity, promoting osteoblast differentiation and biomineralization. Involved in the regulation of M6P-dependent Golgi-to-lysosome trafficking of lysosomal enzymes. It is required for the activation of CREB3L2/BBF2H7, a transcriptional activator of MIA3/TANGO and other genes controlling mega vesicle formation. Therefore, it plays a key role in the regulation of mega vesicle-mediated collagen trafficking. In astrocytes and osteoblasts, upon DNA damage and ER stress, mediates the first step of the regulated intramembrane proteolytic activation of the transcription factor CREB3L1, leading to the inhibition of cell-cycle progression. This chain is Membrane-bound transcription factor site-1 protease (Mbtps1), found in Mus musculus (Mouse).